The sequence spans 233 residues: Orotidine 5'-phosphate decarboxylase (233 aa).

Substrate contacts are provided by residues Asp-11, Lys-34, 61-70 (DLKLHDIPNT), Thr-117, Arg-179, Gln-188, Gly-208, and Arg-209. Lys-63 functions as the Proton donor in the catalytic mechanism.

It belongs to the OMP decarboxylase family. Type 1 subfamily. As to quaternary structure, homodimer.

It carries out the reaction orotidine 5'-phosphate + H(+) = UMP + CO2. It functions in the pathway pyrimidine metabolism; UMP biosynthesis via de novo pathway; UMP from orotate: step 2/2. In terms of biological role, catalyzes the decarboxylation of orotidine 5'-monophosphate (OMP) to uridine 5'-monophosphate (UMP). The chain is Orotidine 5'-phosphate decarboxylase from Streptococcus pneumoniae (strain P1031).